The primary structure comprises 315 residues: p-hydroxyphenylacetate 3-hydroxylase, reductase component (315 aa).

This sequence belongs to the non-flavoprotein flavin reductase family. In terms of assembly, homodimer. The p-hydroxyphenylacetate 3-hydroxylase (HpaH) is composed of an oxygenase component C2 and a reductase component C1.

The enzyme catalyses a reduced flavin + NAD(+) = an oxidized flavin + NADH + 2 H(+). It functions in the pathway aromatic compound metabolism; 4-hydroxyphenylacetate degradation; pyruvate and succinate semialdehyde from 4-hydroxyphenylacetate: step 1/7. With respect to regulation, flavin concentrations greater than 15 uM do not inhibit the NADH oxidation activity of the reductase component C1 but do affect the hydroxylation activity of the C1-C2 complex. Maximal reductase activity is achieved only upon HPA binding to the reductase component C1 before interaction with NADH. HPA stimulates the rates of both the reduction of FMN and release of reduced FMN from the reductase component. Reductase component of a two-component system that supplies reduced FMN (FMNH2) to the oxygenase component to catalyze the hydroxylation of 4-hydroxyphenylacetic acid, leading to the production of 3,4-dihydroxyphenylacetate (3,4-DHPA). Catalyzes the reduction of free flavins (FMN, FAD and riboflavin) by NADH. Subsequently, the reduced flavins diffuse to the oxygenase component C2. This chain is p-hydroxyphenylacetate 3-hydroxylase, reductase component, found in Acinetobacter baumannii.